We begin with the raw amino-acid sequence, 362 residues long: 3-isopropylmalate dehydrogenase (362 aa).

78 to 91 (GYKWDSLPPHQRPE) contacts NAD(+). Substrate-binding residues include Arg-98, Arg-108, Arg-136, and Asp-226. Residues Asp-226, Asp-250, and Asp-254 each coordinate Mg(2+). Residue 284–296 (GSAPDIAGLDKAN) coordinates NAD(+).

This sequence belongs to the isocitrate and isopropylmalate dehydrogenases family. LeuB type 1 subfamily. Homodimer. It depends on Mg(2+) as a cofactor. Requires Mn(2+) as cofactor.

It is found in the cytoplasm. The enzyme catalyses (2R,3S)-3-isopropylmalate + NAD(+) = 4-methyl-2-oxopentanoate + CO2 + NADH. It participates in amino-acid biosynthesis; L-leucine biosynthesis; L-leucine from 3-methyl-2-oxobutanoate: step 3/4. Functionally, catalyzes the oxidation of 3-carboxy-2-hydroxy-4-methylpentanoate (3-isopropylmalate) to 3-carboxy-4-methyl-2-oxopentanoate. The product decarboxylates to 4-methyl-2 oxopentanoate. This Trichormus variabilis (strain ATCC 29413 / PCC 7937) (Anabaena variabilis) protein is 3-isopropylmalate dehydrogenase.